The chain runs to 173 residues: NADH-ubiquinone oxidoreductase chain 6 (173 aa).

Helical transmembrane passes span 1 to 21 (MTYF…AVAS), 27 to 47 (YGVV…LSLG), 48 to 68 (VSFV…VVFV), 87 to 107 (VVGY…VGGL), and 139 to 159 (CGVG…FVVL).

This sequence belongs to the complex I subunit 6 family.

It is found in the mitochondrion membrane. The catalysed reaction is a ubiquinone + NADH + 5 H(+)(in) = a ubiquinol + NAD(+) + 4 H(+)(out). Its function is as follows. Core subunit of the mitochondrial membrane respiratory chain NADH dehydrogenase (Complex I) that is believed to belong to the minimal assembly required for catalysis. Complex I functions in the transfer of electrons from NADH to the respiratory chain. The immediate electron acceptor for the enzyme is believed to be ubiquinone. The sequence is that of NADH-ubiquinone oxidoreductase chain 6 (MT-ND6) from Synthliboramphus wumizusume (Japanese murrelet).